The primary structure comprises 78 residues: Large ribosomal subunit protein bL28 (78 aa).

It belongs to the bacterial ribosomal protein bL28 family.

The chain is Large ribosomal subunit protein bL28 from Proteus mirabilis (strain HI4320).